Here is a 252-residue protein sequence, read N- to C-terminus: Carbohydrate deacetylase (252 aa).

The Mg(2+) site is built by H59 and H122.

This sequence belongs to the YdjC deacetylase family. In terms of assembly, homodimer. Mg(2+) serves as cofactor.

In terms of biological role, probably catalyzes the deacetylation of acetylated carbohydrates an important step in the degradation of oligosaccharides. The chain is Carbohydrate deacetylase from Vibrio vulnificus (strain YJ016).